A 181-amino-acid chain; its full sequence is uncharacterized protein (181 aa).

This is an uncharacterized protein from Methanocaldococcus jannaschii (strain ATCC 43067 / DSM 2661 / JAL-1 / JCM 10045 / NBRC 100440) (Methanococcus jannaschii).